We begin with the raw amino-acid sequence, 255 residues long: Accessory gland-specific peptide 26Aa (255 aa).

A signal peptide spans 1 to 18 (MNQILLCSQILLLLFAVA). A disordered region spans residues 86 to 110 (PINNSKSRKNSSTLPSQILTDKPNQ). Residues 87 to 110 (INNSKSRKNSSTLPSQILTDKPNQ) are compositionally biased toward polar residues. Residues Asn-88, Asn-95, and Asn-136 are each glycosylated (N-linked (GlcNAc...) asparagine). Disordered stretches follow at residues 177–197 (NAQN…KDIA) and 235–255 (NNPA…PSTT). Residues 183–192 (KPTKSCKKRP) are compositionally biased toward basic residues. A compositionally biased stretch (polar residues) spans 245 to 255 (KSPSEGNPSTT).

Post-translationally, it undergoes several cleavages as it is secreted and it is further processed in the recipient female. As to expression, main cells of the accessory glands of males.

It localises to the secreted. The protein localises to the extracellular space. In terms of biological role, this protein is transferred from male to female's hemolymph during mating, affecting egglaying and behavior after mating. In Drosophila simulans (Fruit fly), this protein is Accessory gland-specific peptide 26Aa (Acp26Aa).